The chain runs to 643 residues: Threonine--tRNA ligase (643 aa).

Residues 1–61 enclose the TGS domain; that stretch reads MPIITLPDGS…EQDATLEIIT (61 aa). Positions 243–534 are catalytic; that stretch reads DHRKIGKALD…ITEEYAGFFP (292 aa). Zn(2+) contacts are provided by cysteine 334, histidine 385, and histidine 511.

The protein belongs to the class-II aminoacyl-tRNA synthetase family. Homodimer. Zn(2+) serves as cofactor.

The protein localises to the cytoplasm. The enzyme catalyses tRNA(Thr) + L-threonine + ATP = L-threonyl-tRNA(Thr) + AMP + diphosphate + H(+). Its function is as follows. Catalyzes the attachment of threonine to tRNA(Thr) in a two-step reaction: L-threonine is first activated by ATP to form Thr-AMP and then transferred to the acceptor end of tRNA(Thr). Also edits incorrectly charged L-seryl-tRNA(Thr). The sequence is that of Threonine--tRNA ligase from Haemophilus influenzae (strain PittEE).